The primary structure comprises 535 residues: GMP synthase [glutamine-hydrolyzing] (535 aa).

One can recognise a Glutamine amidotransferase type-1 domain in the interval 24–217 (KILIVDFGSQ…VRKVAGLTGD (194 aa)). Cysteine 101 acts as the Nucleophile in catalysis. Active-site residues include histidine 191 and glutamate 193. In terms of domain architecture, GMPS ATP-PPase spans 218–410 (WTMRAFREEA…LGLPEIFVGR (193 aa)). ATP is bound at residue 245–251 (SGGVDSS).

As to quaternary structure, homodimer.

It carries out the reaction XMP + L-glutamine + ATP + H2O = GMP + L-glutamate + AMP + diphosphate + 2 H(+). It functions in the pathway purine metabolism; GMP biosynthesis; GMP from XMP (L-Gln route): step 1/1. Its function is as follows. Catalyzes the synthesis of GMP from XMP. This chain is GMP synthase [glutamine-hydrolyzing], found in Nitrobacter winogradskyi (strain ATCC 25391 / DSM 10237 / CIP 104748 / NCIMB 11846 / Nb-255).